The following is a 101-amino-acid chain: Small ribosomal subunit protein uS14 (101 aa).

Belongs to the universal ribosomal protein uS14 family. As to quaternary structure, part of the 30S ribosomal subunit. Contacts proteins S3 and S10.

In terms of biological role, binds 16S rRNA, required for the assembly of 30S particles and may also be responsible for determining the conformation of the 16S rRNA at the A site. This chain is Small ribosomal subunit protein uS14, found in Polaromonas sp. (strain JS666 / ATCC BAA-500).